Reading from the N-terminus, the 382-residue chain is Homoserine O-acetyltransferase (382 aa).

The AB hydrolase-1 domain occupies 52–356; that stretch reads NVVMVLHALT…TYGHDGFLVE (305 aa). Ser-157 serves as the catalytic Nucleophile. Residue Arg-227 participates in substrate binding. Residues Asp-320 and His-350 contribute to the active site. Residue Asp-351 participates in substrate binding.

This sequence belongs to the AB hydrolase superfamily. MetX family. In terms of assembly, homodimer.

Its subcellular location is the cytoplasm. It carries out the reaction L-homoserine + acetyl-CoA = O-acetyl-L-homoserine + CoA. It functions in the pathway amino-acid biosynthesis; L-methionine biosynthesis via de novo pathway; O-acetyl-L-homoserine from L-homoserine: step 1/1. Its function is as follows. Transfers an acetyl group from acetyl-CoA to L-homoserine, forming acetyl-L-homoserine. The polypeptide is Homoserine O-acetyltransferase (Mycobacterium leprae (strain TN)).